The following is a 360-amino-acid chain: Viral protein TPX (360 aa).

A disordered region spans residues 269–289; it reads TVTPISSPSPTPTPTPTPTPT. A Thr-Pro(N) repeat occupies 270–291; it reads VTPISSPSPTPTPTPTPTPTPT. Residues 275–289 show a composition bias toward pro residues; it reads SPSPTPTPTPTPTPT. A 3 Thr-Pro repeats regions and two near identical repeats region spans residues 278–353; sequence PTPTPTPTPT…PTPTPTPTPT (76 aa). The segment at residues 292-301 is a repeat; that stretch reads YDITYVVFDV. The Thr-Pro(N) repeat unit spans residues 302–322; that stretch reads TPSPTPTPTLTSTPTPTPTPT. A repeat spans 323 to 332; that stretch reads YDITYVIFDV. The disordered stretch occupies residues 332 to 360; that stretch reads VTPSPTPTPTPTPTPTPTPTPTSTTSSNI. The stretch at 333 to 353 is one Thr-Pro(N) repeat; it reads TPSPTPTPTPTPTPTPTPTPT. Positions 335–351 are enriched in pro residues; the sequence is SPTPTPTPTPTPTPTPT.

The polypeptide is Viral protein TPX (Thermoproteus tenax (TTV1)).